The sequence spans 1277 residues: Membrane-associated guanylate kinase, WW and PDZ domain-containing protein 2 (1277 aa).

Positions 17 to 101 (ESVIGRNPEG…PLRLKCVKQG (85 aa)) constitute a PDZ domain. Positions 109–283 (RHYLNLRFQK…APVYSQPEEL (175 aa)) constitute a Guanylate kinase-like domain. A disordered region spans residues 205–308 (PGATPSAEGK…EDSDPLPDNW (104 aa)). The segment covering 281-296 (EELKDQMDDTKSTKPE) has biased composition (basic and acidic residues). 2 consecutive WW domains span residues 302 to 335 (DPLPDNWEMAYTEKGEVYFIDHNTKTTSWLDPRL) and 348 to 381 (NELPYGWEKIDDPIYGTYYVDHINRRTQFENPVL). The interaction with DDN stretch occupies residues 302–381 (DPLPDNWEMA…RRTQFENPVL (80 aa)). Tyr362 bears the Phosphotyrosine mark. A PDZ 1 domain is found at 426 to 510 (STTLKKSNMG…SVNLVLCRGY (85 aa)). The segment at 556-575 (QSVPDITDRPPHSLHSMPAD) is disordered. The PDZ 2 domain occupies 605 to 683 (TLTIVKGAKG…ETSLIIHRGG (79 aa)). The residue at position 686 (Ser686) is a Phosphoserine. In terms of domain architecture, PDZ 3 spans 778-860 (DVHLRRMESG…NGQVNLTVRR (83 aa)). A Phosphotyrosine modification is found at Tyr827. The segment at 869–913 (CPENGRSPGSVSTHHSSPRSDYATYANSNHAAPSNNASPPEGFAS) is disordered. Residues Ser884 and Ser885 each carry the phosphoserine modification. Residues 894–908 (ANSNHAAPSNNASPP) show a composition bias toward low complexity. Residues 920–1010 (DVIIHRKENE…SVTLRIIPQE (91 aa)) form the PDZ 4 domain. The span at 1011 to 1042 (ELNNPTSAPSSEKQSPMAQQHSPLAQQHSPLA) shows a compositional bias: polar residues. The disordered stretch occupies residues 1011 to 1130 (ELNNPTSAPS…PDTRQYPLSD (120 aa)). The span at 1069 to 1085 (NSYRSEVKARQDVKPDI) shows a compositional bias: basic and acidic residues. One can recognise a PDZ 5 domain in the interval 1141-1223 (TVDMEKGAKG…RVRLLLKRGT (83 aa)).

This sequence belongs to the MAGUK family. As to quaternary structure, interacts (via its WW domains) with DRPLA. Interacts with CTNNB1, ACVR2A, SMAD2 and SMAD3. Part of a complex consisting of MAGI2/ARIP1, ACVR2A, ACVR1B and SMAD3. May interact with HTR2A and IGSF9. Interacts with HTR4. Interacts (via guanylate kinase domain) with DLGAP1. Interacts (via PDZ domains) with GRIN2A, GRID2 and NLGN1. Interacts with CTNND2. Interacts with MAGUIN-1. Interacts (via its second PDZ domain) with PTEN (via unphosphorylated C-terminus); this interaction diminishes the degradation rate of PTEN. Found in a complex, at least composed of KIDINS220, MAGI2, NTRK1 and RAPGEF2; the complex is mainly formed at late endosomes in a NGF-dependent manner. Interacts with RAPGEF2; the interaction occurs before or after nerve growth factor (NGF) stimulation. Isoform 1 interacts (via PDZ domain) with KIDINS220 isoform 2 (via C-terminal domain). Interacts with DDN. Identified in a complex with ACTN4, CASK, IQGAP1, NPHS1, SPTAN1 and SPTBN1. Interacts with DLL1. Found in a complex with IGSF9B and NLGN2; the interaction with IGSF9B is mediated via the PDZ 5 and PDZ 6 domains, while the interaction with NLGN2 is mediated via the WW1, WW2 and PDZ2 domains. Interacts (via PDZ 6 domain) with USH1G (via SAM domain); the interaction is triggered by phosphorylation of USH1G by CK2 and negatively regulates MAGI2-mediated endocytosis. In terms of tissue distribution, expressed in the foot process layer of podocytes of the kidney glomeruli but not in tubules (at protein level). Expressed in the brain.

The protein resides in the cytoplasm. It localises to the late endosome. Its subcellular location is the synapse. It is found in the synaptosome. The protein localises to the cell membrane. The protein resides in the cytoskeleton. It localises to the microtubule organizing center. Its subcellular location is the centrosome. It is found in the cell projection. The protein localises to the cilium. The protein resides in the centriole. It localises to the photoreceptor inner segment. Its subcellular location is the photoreceptor outer segment. Seems to act as scaffold molecule at synaptic junctions by assembling neurotransmitter receptors and cell adhesion proteins. Plays a role in nerve growth factor (NGF)-induced recruitment of RAPGEF2 to late endosomes and neurite outgrowth. May play a role in regulating activin-mediated signaling in neuronal cells. Enhances the ability of PTEN to suppress AKT1 activation. Plays a role in receptor-mediated clathrin-dependent endocytosis which is required for ciliogenesis. The chain is Membrane-associated guanylate kinase, WW and PDZ domain-containing protein 2 (Magi2) from Rattus norvegicus (Rat).